The primary structure comprises 580 residues: Glutathione hydrolase proenzyme (580 aa).

The first 25 residues, 1–25, serve as a signal peptide directing secretion; sequence MIKPTFLRRVAIAALLSGSCFSAAA. Position 114 (Arg-114) interacts with L-glutamate. Catalysis depends on Thr-391, which acts as the Nucleophile. Residues Thr-409, Asn-411, Gln-430, Asp-433, 462-463, and 483-484 each bind L-glutamate; these read SS and GG. A disordered region spans residues 561–580; it reads DGELYGASDPRSVDDLTAGY.

It belongs to the gamma-glutamyltransferase family. As to quaternary structure, this enzyme consists of two polypeptide chains, which are synthesized in precursor form from a single polypeptide. Post-translationally, cleaved by autocatalysis into a large and a small subunit.

Its subcellular location is the periplasm. The enzyme catalyses an N-terminal (5-L-glutamyl)-[peptide] + an alpha-amino acid = 5-L-glutamyl amino acid + an N-terminal L-alpha-aminoacyl-[peptide]. The catalysed reaction is glutathione + H2O = L-cysteinylglycine + L-glutamate. It catalyses the reaction an S-substituted glutathione + H2O = an S-substituted L-cysteinylglycine + L-glutamate. It functions in the pathway sulfur metabolism; glutathione metabolism. With respect to regulation, transferase and hydrolase activities are inhibited by L-Ala and L-Gln, and also by GGT affinity labeling reagents such as azaserine and 6-diazo-5-oxo-nor-leucine. In terms of biological role, cleaves the gamma-glutamyl bond of periplasmic glutathione (gamma-Glu-Cys-Gly), glutathione conjugates, and other gamma-glutamyl compounds. The metabolism of glutathione releases free glutamate and the dipeptide cysteinyl-glycine, which is hydrolyzed to cysteine and glycine by dipeptidases; it may function in amino acid uptake/salvage, or possibly in peptidoglycan linkage. Catalyzes the hydrolysis and transpeptidation of many gamma-glutamyl compounds (including some D-gamma-glutamyl substrates), with a preference for basic and aromatic amino acids as acceptors. The KM values for gamma-glutamyl acceptors are so high that it has been proposed transpeptidation is not the physiological role in E.coli. In Escherichia coli (strain K12), this protein is Glutathione hydrolase proenzyme (ggt).